The primary structure comprises 92 residues: Antifungal protein B (92 aa).

A signal peptide spans 1-18; sequence MQITSIAIVFFAAMGAVA. A propeptide spanning residues 19 to 34 is cleaved from the precursor; that stretch reads NPIARESDDLDARDVQ. 3 disulfides stabilise this stretch: C42/C70, C49/C77, and C62/C88.

The protein resides in the secreted. The protein localises to the host cytoplasm. In terms of biological role, antifungal protein that acts as an inhibitor of growth of human pathogenic molds and yeasts. Is active against the model organism Neurospora crassa, the opportunistic human pathogens Aspergillus fumigatus, Trichophyton rubrum, and Aspergillus terreus. Provokes a reduction of the incidence of infections caused by Penicillium digitatum and Penicillium italicum in oranges and by Penicillium expansum in apples. Low doses of pafB have self-inhibition activity. Also shows activity against the model yeast Saccaromyces cerevisiae and the opportunistic human pathogen Candida albicans. No antibacterial activity is observed on the Gram-negative Escherichia coli and the Gram-positive Bacillus subtilis. Finally, also shows anti-viral activity in a model of HCoV 229E infected L132 cells. This is Antifungal protein B from Penicillium chrysogenum (Penicillium notatum).